Here is a 190-residue protein sequence, read N- to C-terminus: Peptidoglycan recognition protein 1 (190 aa).

An N-terminal signal peptide occupies residues 1–21 (MSRRYTPLAWVLLALLGLGAA). Residue Gln-22 is modified to Pyrrolidone carboxylic acid. Intrachain disulfides connect Cys-24/Cys-148, Cys-40/Cys-85, and Cys-61/Cys-67. The N-acetylmuramoyl-L-alanine amidase domain occupies 46 to 174 (QPVRYVVVSH…RDVQQTLSPG (129 aa)).

This sequence belongs to the N-acetylmuramoyl-L-alanine amidase 2 family. Homodimer; disulfide-linked.

It localises to the secreted. It is found in the cytoplasmic granule. Its function is as follows. Innate immunity protein that plays several important functions in antimicrobial and antitumor defense systems. Acts as a pattern receptor that binds to murein peptidoglycans (PGN) of Gram-positive bacteria and thus provides bactericidal activity. Forms an equimolar complex with heat shock protein HSPA1A and induces programmed cell death through apoptosis and necroptosis in tumor cell lines by activating the TNFR1 receptor on the target cell membrane. In addition, acts in complex with the Ca(2+)-binding protein S100A4 as a chemoattractant able to induce lymphocyte movement. Mechanistically, this complex acts as a ligand of the chemotactic receptors CCR5 and CXCR3 which are present on the cells of the immune system. Promotes also the activation of lymphocytes that become able to kill virus-infected cells as well as tumor cells by modulating the spectrum of their target-cell specificity. Induction of cytotoxicity on monocyte surface requires interaction with TREM1 receptor. In Bos indicus (Zebu), this protein is Peptidoglycan recognition protein 1 (PGLYRP1).